Reading from the N-terminus, the 207-residue chain is Phosphoenolpyruvate guanylyltransferase (207 aa).

Positions 137, 153, and 156 each coordinate phosphoenolpyruvate.

This sequence belongs to the CofC family.

The enzyme catalyses phosphoenolpyruvate + GTP + H(+) = enolpyruvoyl-2-diphospho-5'-guanosine + diphosphate. It functions in the pathway cofactor biosynthesis; coenzyme F420 biosynthesis. Its function is as follows. Guanylyltransferase that catalyzes the activation of phosphoenolpyruvate (PEP) as enolpyruvoyl-2-diphospho-5'-guanosine, via the condensation of PEP with GTP. It is involved in the biosynthesis of coenzyme F420, a hydride carrier cofactor. The protein is Phosphoenolpyruvate guanylyltransferase of Sphaerobacter thermophilus (strain ATCC 49802 / DSM 20745 / KCCM 41009 / NCIMB 13125 / S 6022).